The following is a 928-amino-acid chain: Retinoblastoma-associated protein (928 aa).

The interval 1-42 (MPPKTPRKTAATAAAAAAEPPAPPPPPPPEEDPEQDSGPEDL) is disordered. A N,N-dimethylproline modification is found at Pro-2. Residues 8–19 (KTAATAAAAAAE) are compositionally biased toward low complexity. Residues 29–39 (PEEDPEQDSGP) are compositionally biased toward acidic residues. Ser-37 carries the phosphoserine modification. The residue at position 249 (Ser-249) is a Phosphoserine; by CDK1. Position 252 is a phosphothreonine; by CDK1 (Thr-252). Thr-356 is subject to Phosphothreonine. Thr-373 is modified (phosphothreonine; by CDK1). The interval 373–579 (TPVRTVMNTI…FDLIKQSKDR (207 aa)) is domain A. The pocket; binds T and E1A stretch occupies residues 373 to 771 (TPVRTVMNTI…QRLKTNILQY (399 aa)). Ser-567 is modified (phosphoserine; by CDK2). Positions 580-639 (EGPTDHLESACPLNLPLQNNHTAADMYLSPVRSPKKKGSTTRVNSTANAETQATSAFQTQ) are spacer. Position 608 is a phosphoserine (Ser-608). A disordered region spans residues 610–632 (VRSPKKKGSTTRVNSTANAETQA). Ser-612 carries the post-translational modification Phosphoserine; by CHEK2 and CHEK1. Residues 619–632 (TTRVNSTANAETQA) are compositionally biased toward polar residues. Residue Ser-624 is modified to Phosphoserine. A domain B region spans residues 640 to 771 (KPLKSTSLSL…QRLKTNILQY (132 aa)). An interaction with LIMD1 region spans residues 763-928 (RLKTNILQYA…SMDTSNKEEK (166 aa)). Residues 771–928 (YASTRPPTLS…SMDTSNKEEK (158 aa)) form a domain C; mediates interaction with E4F1 region. A phosphoserine mark is found at Ser-780, Ser-788, and Ser-795. At Ser-807 the chain carries Phosphoserine; by CDK1 and CDK3. At Lys-810 the chain carries N6-methyllysine; by SMYD2. Phosphoserine; by CDK1 and CDK3 is present on Ser-811. Thr-821 is subject to Phosphothreonine; by CDK6. Position 823 is a phosphothreonine (Thr-823). A Phosphothreonine; by CDK4 modification is found at Thr-826. A Phosphothreonine modification is found at Thr-841. At Ser-855 the chain carries Phosphoserine. At Lys-860 the chain carries N6-methyllysine; by SMYD2. The Bipartite nuclear localization signal motif lies at 860–876 (KRSAEGSNPPKPLKKLR). A disordered region spans residues 860–928 (KRSAEGSNPP…SMDTSNKEEK (69 aa)). Residues Lys-873 and Lys-874 each carry the N6-acetyllysine; by PCAF modification. The segment covering 915–928 (KMNDSMDTSNKEEK) has biased composition (basic and acidic residues).

The protein belongs to the retinoblastoma protein (RB) family. As to quaternary structure, the hypophosphorylated form interacts with and sequesters the E2F1 transcription factor, thereby inhibiting E2F1 transcription. Interacts with heterodimeric E2F/DP transcription factor complexes containing TFDP1 and either E2F1, E2F3, E2F4 or E2F5, or TFDP2 and E2F4. Interacts (when hyperphosphorylated and hypophosphorylated) with PKP3; the interaction inhibits RB1 interaction with and repression of the transcription factor E2F1, potentially via sequestering RB1 to the cytoplasm. The unphosphorylated form interacts with EID1, ARID3B, KDM5A, SUV39H1, MJD2A/JHDM3A and THOC1. Interacts with the N-terminal domain of TAF1. Interacts with SNW1, ATAD5, AATF, DNMT1, LIN9, LMNA, KMT5B, KMT5C, PELP1, UHRF2 and TMPO-alpha. Interacts with GRIP1 and UBR4. Interacts with ARID4A and KDM5B. Interacts with E4F1 and LIMD1. Interacts with SMARCA4/BRG1 and HDAC1. Interacts with PSMA3 and USP4. Interacts (when methylated at Lys-860) with L3MBTL1. Interacts with CHEK2; phosphorylates RB1. Interacts with CDK1 and CDK2. Interacts with PRMT2. Interacts with CEBPA. P-TEFB complex interacts with RB1; promotes phosphorylation of RB1. Interacts with RBBP9; the interaction disrupts RB1 binding to E2F1. Interacts with KAT2B/PCAF and EP300/P300. Interacts with PAX5. Interacts (phosphorylated and unphosphorylated) with BLCAP. May interact with NDC80. In terms of assembly, (Microbial infection) Interacts with adenovirus E1A protein. (Microbial infection) Interacts with HPV E7 protein. As to quaternary structure, (Microbial infection) Interacts with SV40 large T antigen. In terms of assembly, (Microbial infection) Interacts with human cytomegalovirus/HHV-5 proteins UL82 and UL123. (Microbial infection) Interacts with molluscum contagiosum virus protein MC007. In terms of processing, phosphorylated by CDK6 and CDK4, and subsequently by CDK2 at Ser-567 in G1, thereby releasing E2F1 which is then able to activate cell growth. Dephosphorylated at the late M phase. SV40 large T antigen, HPV E7 and adenovirus E1A bind to the underphosphorylated, active form of pRb. Phosphorylation at Thr-821 and Thr-826 promotes interaction between the C-terminal domain C and the Pocket domain, and thereby inhibits interactions with heterodimeric E2F/DP transcription factor complexes. Dephosphorylated at Ser-795 by calcineruin upon calcium stimulation. CDK3/cyclin-C-mediated phosphorylation at Ser-807 and Ser-811 is required for G0-G1 transition. Phosphorylated by CDK1 and CDK2 upon TGFB1-mediated apoptosis. Post-translationally, N-terminus is methylated by METTL11A/NTM1. Monomethylation at Lys-810 by SMYD2 enhances phosphorylation at Ser-807 and Ser-811, and promotes cell cycle progression. Monomethylation at Lys-860 by SMYD2 promotes interaction with L3MBTL1. Acetylated during keratinocyte differentiation. Acetylation at Lys-873 and Lys-874 regulates subcellular localization. Can be deacetylated by SIRT1. Expressed in the retina. Expressed in foreskin keratinocytes (at protein level).

The protein resides in the nucleus. It localises to the cytoplasm. In terms of biological role, tumor suppressor that is a key regulator of the G1/S transition of the cell cycle. The hypophosphorylated form binds transcription regulators of the E2F family, preventing transcription of E2F-responsive genes. Both physically blocks E2Fs transactivating domain and recruits chromatin-modifying enzymes that actively repress transcription. Cyclin and CDK-dependent phosphorylation of RB1 induces its dissociation from E2Fs, thereby activating transcription of E2F responsive genes and triggering entry into S phase. RB1 also promotes the G0-G1 transition upon phosphorylation and activation by CDK3/cyclin-C. Directly involved in heterochromatin formation by maintaining overall chromatin structure and, in particular, that of constitutive heterochromatin by stabilizing histone methylation. Recruits and targets histone methyltransferases SUV39H1, KMT5B and KMT5C, leading to epigenetic transcriptional repression. Controls histone H4 'Lys-20' trimethylation. Inhibits the intrinsic kinase activity of TAF1. Mediates transcriptional repression by SMARCA4/BRG1 by recruiting a histone deacetylase (HDAC) complex to the c-FOS promoter. In resting neurons, transcription of the c-FOS promoter is inhibited by BRG1-dependent recruitment of a phospho-RB1-HDAC1 repressor complex. Upon calcium influx, RB1 is dephosphorylated by calcineurin, which leads to release of the repressor complex. (Microbial infection) In case of viral infections, interactions with SV40 large T antigen, HPV E7 protein or adenovirus E1A protein induce the disassembly of RB1-E2F1 complex thereby disrupting RB1's activity. The chain is Retinoblastoma-associated protein (RB1) from Homo sapiens (Human).